The chain runs to 284 residues: Tropomyosin (284 aa).

The tract at residues 1–39 is disordered; that stretch reads MDAIKKKMQAMKLEKDNAMDRADTLEQQNKEANIRAEKT. Residues 1–284 adopt a coiled-coil conformation; the sequence is MDAIKKKMQA…DQTFSELSGY (284 aa). Residues 12–39 are compositionally biased toward basic and acidic residues; it reads KLEKDNAMDRADTLEQQNKEANIRAEKT.

This sequence belongs to the tropomyosin family. As to quaternary structure, homodimer.

Tropomyosin, in association with the troponin complex, plays a central role in the calcium dependent regulation of muscle contraction. This chain is Tropomyosin (TM1), found in Homarus americanus (American lobster).